Reading from the N-terminus, the 297-residue chain is 4-hydroxy-tetrahydrodipicolinate synthase (297 aa).

Residue T46 coordinates pyruvate. The active-site Proton donor/acceptor is the Y136. K165 functions as the Schiff-base intermediate with substrate in the catalytic mechanism. A pyruvate-binding site is contributed by T206.

The protein belongs to the DapA family. As to quaternary structure, homotetramer; dimer of dimers.

The protein localises to the cytoplasm. The catalysed reaction is L-aspartate 4-semialdehyde + pyruvate = (2S,4S)-4-hydroxy-2,3,4,5-tetrahydrodipicolinate + H2O + H(+). It functions in the pathway amino-acid biosynthesis; L-lysine biosynthesis via DAP pathway; (S)-tetrahydrodipicolinate from L-aspartate: step 3/4. Functionally, catalyzes the condensation of (S)-aspartate-beta-semialdehyde [(S)-ASA] and pyruvate to 4-hydroxy-tetrahydrodipicolinate (HTPA). This chain is 4-hydroxy-tetrahydrodipicolinate synthase, found in Sulfurimonas denitrificans (strain ATCC 33889 / DSM 1251) (Thiomicrospira denitrificans (strain ATCC 33889 / DSM 1251)).